The following is a 206-amino-acid chain: Putative transporter protein AmiS2 (206 aa).

Helical transmembrane passes span 4–24 (VGLLYVGAVLFVNGLMLLGTV), 29–49 (ASVLNLFVGALQCVVPTVMLI), 56–76 (SAVLAASGLYLFGFTYLYVGI), 86–106 (GIGWFSLFVACAALVYSFLSF), 113–133 (VFGVIWLAWAALWTLFFLVLG), 142–162 (FTGWAAILLSQPTCTVPAFLI), and 173–193 (VAAGWAGALLVLLGLAKILAA).

This sequence belongs to the AmiS/UreI family.

Its subcellular location is the cell membrane. Its function is as follows. Possible transporter that might be responsible for the adsorption of amidase substrates or release of their hydrolysis products. The protein is Putative transporter protein AmiS2 (amiS2) of Rhodococcus erythropolis (Arthrobacter picolinophilus).